The chain runs to 174 residues: Co-chaperone protein HscB homolog (174 aa).

Positions 2–74 constitute a J domain; the sequence is NYFELFKFSP…IRRAEHMLSL (73 aa).

This sequence belongs to the HscB family. As to quaternary structure, interacts with HscA and stimulates its ATPase activity.

Co-chaperone involved in the maturation of iron-sulfur cluster-containing proteins. Seems to help targeting proteins to be folded toward HscA. The chain is Co-chaperone protein HscB homolog from Shewanella sp. (strain ANA-3).